Here is a 334-residue protein sequence, read N- to C-terminus: Cytoskeleton protein RodZ (334 aa).

Topologically, residues Met1–Gly111 are cytoplasmic. Residues Leu19–Leu71 form the HTH cro/C1-type domain. The H-T-H motif DNA-binding region spans Gln30–Glu49. A helical; Signal-anchor for type II membrane protein transmembrane segment spans residues Trp112–Trp132. The Periplasmic segment spans residues Trp133–Gln334. Disordered stretches follow at residues Asn155–Asn207 and Ala221–Gly241. Residues Thr176–Asn207 show a composition bias toward low complexity.

It belongs to the RodZ family.

It is found in the cell inner membrane. Cytoskeletal protein that is involved in cell-shape control through regulation of the length of the long axis. This Salmonella schwarzengrund (strain CVM19633) protein is Cytoskeleton protein RodZ.